A 402-amino-acid polypeptide reads, in one-letter code: MAT+ sexual cell fertilization-promoting factor (402 aa).

A DNA-binding region (HMG box) is located at residues 169–237; it reads IPRPPNAYIL…KLMSAHPHYR (69 aa). Positions 246-272 are disordered; it reads IRRRAPRRNRAQEVANASPIGENSGAP.

The protein localises to the nucleus. Controls fertilization, probably by determining the mating type. This is MAT+ sexual cell fertilization-promoting factor (FPR1) from Podospora anserina (Pleurage anserina).